A 152-amino-acid chain; its full sequence is Protein Smg homolog (152 aa).

Belongs to the Smg family.

The protein is Protein Smg homolog of Nitrosomonas eutropha (strain DSM 101675 / C91 / Nm57).